Here is a 707-residue protein sequence, read N- to C-terminus: Nucleolin 2 (707 aa).

The disordered stretch occupies residues 1-446 (MGKSSKKSAV…TPASNQNQAT (446 aa)). 2 stretches are compositionally biased toward basic and acidic residues: residues 30-40 (RNAEDEIEKAV) and 47-60 (TVREKVVPSKEEAK). Acidic residues-rich tracts occupy residues 75-85 (SSEEDSSESEE), 108-120 (SSDDSSDDSSSDD), and 144-153 (DSSDESLSDD). Residues 158 to 170 (KPAAPLKKPVALA) are compositionally biased toward low complexity. 3 stretches are compositionally biased toward acidic residues: residues 219–232 (DSSDSDSDSESDED), 248–263 (SESSDSESDSDSDDEA), and 271–287 (ESSDSSDSDSESESDSD). A compositionally biased stretch (basic and acidic residues) spans 300–311 (LTKDTKKGQSKD). The segment covering 312-326 (ESEDSSDESSEESGD) has biased composition (acidic residues). Low complexity predominate over residues 336 to 347 (STTSGTTKPSPK). Residues 355–370 (SDDESDEDDSSDESSD) show a composition bias toward acidic residues. The span at 376-394 (KQTQAKKQAPVAQESSSSD) shows a compositional bias: low complexity. The segment covering 395 to 406 (ESSEEDSDMESD) has biased composition (acidic residues). Residues 407 to 417 (EPAKTPQKKET) show a composition bias toward basic and acidic residues. Over residues 420–429 (SVGSNKSATK) the composition is skewed to polar residues. An RRM 1 domain is found at 449-525 (KTLFVGNLPY…RPVRLDLARE (77 aa)). Disordered stretches follow at residues 527–546 (GAYTPGSGRDNSSFKKPAQS) and 629–707 (RPRP…GDDD). Residues 549-630 (NTIFIKGFDT…YSLYVDEARP (82 aa)) form the RRM 2 domain. The span at 657–681 (GRGDGSRGRGDRGRGRGFGRGDRGH) shows a compositional bias: basic and acidic residues.

It is found in the nucleus. Its subcellular location is the nucleolus. In terms of biological role, involved in pre-rRNA processing and ribosome assembly. This chain is Nucleolin 2, found in Oryza sativa subsp. japonica (Rice).